The primary structure comprises 448 residues: 3-phosphoshikimate 1-carboxyvinyltransferase (448 aa).

Positions 28, 29, and 33 each coordinate 3-phosphoshikimate. Phosphoenolpyruvate is bound at residue lysine 28. Residues glycine 100 and arginine 128 each coordinate phosphoenolpyruvate. 3-phosphoshikimate contacts are provided by serine 173, glutamine 175, aspartate 326, and lysine 353. Residue glutamine 175 coordinates phosphoenolpyruvate. Catalysis depends on aspartate 326, which acts as the Proton acceptor. Phosphoenolpyruvate is bound by residues arginine 357 and arginine 405.

The protein belongs to the EPSP synthase family. As to quaternary structure, monomer.

The protein localises to the cytoplasm. It catalyses the reaction 3-phosphoshikimate + phosphoenolpyruvate = 5-O-(1-carboxyvinyl)-3-phosphoshikimate + phosphate. It participates in metabolic intermediate biosynthesis; chorismate biosynthesis; chorismate from D-erythrose 4-phosphate and phosphoenolpyruvate: step 6/7. Functionally, catalyzes the transfer of the enolpyruvyl moiety of phosphoenolpyruvate (PEP) to the 5-hydroxyl of shikimate-3-phosphate (S3P) to produce enolpyruvyl shikimate-3-phosphate and inorganic phosphate. The sequence is that of 3-phosphoshikimate 1-carboxyvinyltransferase from Sinorhizobium fredii (strain NBRC 101917 / NGR234).